Consider the following 387-residue polypeptide: Succinate--CoA ligase [ADP-forming] subunit beta (387 aa).

The ATP-grasp domain maps to 9–244; the sequence is KAIFADNGIP…ITEENPAERE (236 aa). ATP is bound by residues Lys46, 53-55, Glu99, Ala102, and Glu107; that span reads GRG. Residues Asn199 and Asp213 each coordinate Mg(2+). Substrate is bound by residues Asn264 and 321-323; that span reads GIV.

Belongs to the succinate/malate CoA ligase beta subunit family. As to quaternary structure, heterotetramer of two alpha and two beta subunits. Requires Mg(2+) as cofactor.

The enzyme catalyses succinate + ATP + CoA = succinyl-CoA + ADP + phosphate. The catalysed reaction is GTP + succinate + CoA = succinyl-CoA + GDP + phosphate. The protein operates within carbohydrate metabolism; tricarboxylic acid cycle; succinate from succinyl-CoA (ligase route): step 1/1. Functionally, succinyl-CoA synthetase functions in the citric acid cycle (TCA), coupling the hydrolysis of succinyl-CoA to the synthesis of either ATP or GTP and thus represents the only step of substrate-level phosphorylation in the TCA. The beta subunit provides nucleotide specificity of the enzyme and binds the substrate succinate, while the binding sites for coenzyme A and phosphate are found in the alpha subunit. The protein is Succinate--CoA ligase [ADP-forming] subunit beta of Campylobacter jejuni subsp. jejuni serotype O:6 (strain 81116 / NCTC 11828).